A 99-amino-acid chain; its full sequence is DNA/RNA-binding protein Alba 1 (99 aa).

An N6-acetyllysine modification is found at Lys17.

This sequence belongs to the histone-like Alba family. Post-translationally, acetylated. Acetylation at Lys-17 decreases DNA-binding affinity.

The protein localises to the cytoplasm. It is found in the chromosome. Binds double-stranded DNA tightly but without sequence specificity. Involved in DNA compaction. In Sulfurisphaera tokodaii (strain DSM 16993 / JCM 10545 / NBRC 100140 / 7) (Sulfolobus tokodaii), this protein is DNA/RNA-binding protein Alba 1.